Reading from the N-terminus, the 290-residue chain is Ribosomal RNA small subunit methyltransferase A (290 aa).

S-adenosyl-L-methionine contacts are provided by Asn27, Leu29, Gly54, Glu75, Asp100, and Asn125.

Belongs to the class I-like SAM-binding methyltransferase superfamily. rRNA adenine N(6)-methyltransferase family. RsmA subfamily.

It localises to the cytoplasm. The catalysed reaction is adenosine(1518)/adenosine(1519) in 16S rRNA + 4 S-adenosyl-L-methionine = N(6)-dimethyladenosine(1518)/N(6)-dimethyladenosine(1519) in 16S rRNA + 4 S-adenosyl-L-homocysteine + 4 H(+). Functionally, specifically dimethylates two adjacent adenosines (A1518 and A1519) in the loop of a conserved hairpin near the 3'-end of 16S rRNA in the 30S particle. May play a critical role in biogenesis of 30S subunits. The protein is Ribosomal RNA small subunit methyltransferase A of Streptococcus thermophilus (strain ATCC BAA-250 / LMG 18311).